The sequence spans 280 residues: Merozoite surface protein 2 (280 aa).

The signal sequence occupies residues 1–20 (MKVIKTLSIINFFIFVTFNI). N-linked (GlcNAc...) asparagine glycosylation is found at Asn-22 and Asn-36. Residues 44–206 (ANEGSNTKSV…PQTAENENPA (163 aa)) form a polymorphic region region. The tract at residues 47–242 (GSNTKSVGAN…SQKECTDGNK (196 aa)) is disordered. Positions 51 to 74 (KSVGANAPKADTIASGSQSSTNSA) are 5 X 12 AA tandem repeats of P-P-I-T-T-T-E-S-N-S-R-S. Residues 64–98 (ASGSQSSTNSASTSTTNNGESQTTTPTAADTPTAT) are compositionally biased toward low complexity. Over residues 99 to 149 (ESNSRSPPITTTESNSRSPPITTTESNSRSPPITTTESNSRSPPITTTESN) the composition is skewed to polar residues. 4 tandem repeats follow at residues 105 to 116 (PPITTTESNSRS), 117 to 128 (PPITTTESNSRS), 129 to 140 (PPITTTESNSRS), and 141 to 152 (PPITTTESNSRS). Residues 150–163 (SRSPPITTTESSSS) show a composition bias toward low complexity. Residues 153 to 160 (PPITTTES) form a 5; partial repeat. Residue Asn-168 is glycosylated (N-linked (GlcNAc...) asparagine). A compositionally biased stretch (basic and acidic residues) spans 170–182 (TDGKGEESEKQNE). Residues Asn-184 and Asn-229 are each glycosylated (N-linked (GlcNAc...) asparagine). Positions 233-242 (SQKECTDGNK) are enriched in basic and acidic residues. An intrachain disulfide couples Cys-237 to Cys-245. 2 N-linked (GlcNAc...) asparagine glycosylation sites follow: Asn-253 and Asn-254. A lipid anchor (GPI-anchor amidated asparagine) is attached at Asn-254. A propeptide spans 255-280 (SSNIASINKFVVLISATLVLSFAIFI) (removed in mature form).

The protein resides in the cell membrane. Functionally, may play a role in the merozoite attachment to the erythrocyte. In Plasmodium falciparum (isolate K1 / Thailand), this protein is Merozoite surface protein 2.